The following is a 382-amino-acid chain: MAYSAAMKAAIGEMRDVLKAHGLGQQSKEFSAHGEHKPHDDAPFVFVACSGGRDSLALAACAQVVCAAWGIRCGAIIVDHHLQDASHKVAQQTAQTCRDLGLEPVLIVDVQVKERGQGIEAAAREARYAALVGTARRWHATAVLLAHTKDDQAESILIDLIRAAGTDAFAGMPQTQLFDDVLVLRPLLGITRAQTTRICEDEGLEYWDDPTNGDAVPLETALPASYPLRSRVRHDLMPYLSAFAGCDMVDRLARTARIARRDVEALNQEAERALAQTVEFEGNMRDLQADRLADDKLGANIDARALERWPEAIRYRVIARTLAACGLAYASRHVAAVDKLVSQWHGQGKVALPSKYSAKRKAHVIRICEDITHANRRCAKRN.

ATP is bound at residue 50–55; the sequence is SGGRDS.

This sequence belongs to the tRNA(Ile)-lysidine synthase family.

It localises to the cytoplasm. The catalysed reaction is cytidine(34) in tRNA(Ile2) + L-lysine + ATP = lysidine(34) in tRNA(Ile2) + AMP + diphosphate + H(+). Functionally, ligates lysine onto the cytidine present at position 34 of the AUA codon-specific tRNA(Ile) that contains the anticodon CAU, in an ATP-dependent manner. Cytidine is converted to lysidine, thus changing the amino acid specificity of the tRNA from methionine to isoleucine. The chain is tRNA(Ile)-lysidine synthase from Bifidobacterium animalis subsp. lactis (strain AD011).